We begin with the raw amino-acid sequence, 1426 residues long: Phospholipid-transporting ATPase VD (1426 aa).

Residues 1-97 are Cytoplasmic-facing; that stretch reads MTEALQWARY…PRNLFEQFHR (97 aa). The chain crosses the membrane as a helical span at residues 98–118; the sequence is AANLYFLFLVVLNWVPLVEAF. Residues 119-121 lie on the Exoplasmic loop side of the membrane; the sequence is QKE. A helical membrane pass occupies residues 122–142; that stretch reads ITMLPLVVVLTIIAIKDGLED. Over 143-321 the chain is Cytoplasmic; that stretch reads YRKYKIDKQI…SKLERRANTD (179 aa). The chain crosses the membrane as a helical span at residues 322–342; the sequence is VLWCVMLLVIMCLTGAVGHGI. Over 343 to 365 the chain is Exoplasmic loop; the sequence is WLSRYEKMHFFNVPEPDGHIISP. Residues 366–386 traverse the membrane as a helical segment; it reads LLAGFYMFWTMIILLQVLIPI. The Cytoplasmic segment spans residues 387-1113; that stretch reads SLYVSIEIVK…HWCYTRLSNM (727 aa). The active-site 4-aspartylphosphate intermediate is the Asp438. ATP-binding residues include Asp438, Lys439, and Thr440. Asp438 is a binding site for Mg(2+). Thr440 provides a ligand contact to Mg(2+). The disordered stretch occupies residues 506–531; the sequence is NGPLGNKPSNHLAGSSFTLGSGEGAS. The span at 512-524 shows a compositional bias: polar residues; it reads KPSNHLAGSSFTL. ATP-binding positions include Glu730, Phe772, Lys796, Arg840, Thr920, Gly921, Asp922, 996–1003, Arg1030, and Lys1036; that span reads GLIITGKT. A Mg(2+)-binding site is contributed by Asp1056. Asn1059 and Asp1060 together coordinate ATP. Asp1060 provides a ligand contact to Mg(2+). Residues 1114–1134 traverse the membrane as a helical segment; that stretch reads ILYFFYKNVAYVNLLFWYQFF. Topologically, residues 1135-1145 are exoplasmic loop; that stretch reads CGFSGTSMTDY. A helical transmembrane segment spans residues 1146-1166; sequence WVLIFFNLLFTSAPPVIYGVL. Over 1167–1195 the chain is Cytoplasmic; sequence EKDVSAETLMQLPELYRSGQKSEAYLPHT. A helical transmembrane segment spans residues 1196–1216; sequence FWITLLDAFYQSLVCFFVPYF. Over 1217 to 1224 the chain is Exoplasmic loop; sequence TYQGSDTD. A helical transmembrane segment spans residues 1225–1245; that stretch reads IFAFGNPLNTAALFIVLLHLV. The Cytoplasmic segment spans residues 1246–1252; the sequence is IESKSLT. The helical transmembrane segment at 1253–1273 threads the bilayer; it reads WIHLLVIIGSILSYFLFAIVF. At 1274-1292 the chain is on the exoplasmic loop side; sequence GAMCVTCNPPSNPYWIMQE. A helical transmembrane segment spans residues 1293-1313; it reads HMLDPVFYLVCILTTSIALLP. The Cytoplasmic portion of the chain corresponds to 1314-1426; it reads RFVYRVLQGS…MAGPSKGKES (113 aa). 1364–1371 is an ATP binding site; sequence ANQSAGKS.

The protein belongs to the cation transport ATPase (P-type) (TC 3.A.3) family. Type IV subfamily. As to quaternary structure, component of a P4-ATPase flippase complex which consists of a catalytic alpha subunit ATP10A and an accessory beta subunit TMEM30A. Mg(2+) serves as cofactor. Autophosphorylated at the conserved aspartate of the P-type ATPase signature sequence. As to expression, expressed in placenta and, to a lesser extent, in kidney.

The protein resides in the cell membrane. It is found in the endoplasmic reticulum membrane. The catalysed reaction is ATP + H2O + phospholipidSide 1 = ADP + phosphate + phospholipidSide 2.. The enzyme catalyses a beta-D-glucosyl-(1&lt;-&gt;1')-N-acylsphing-4-enine(out) + ATP + H2O = a beta-D-glucosyl-(1&lt;-&gt;1')-N-acylsphing-4-enine(in) + ADP + phosphate + H(+). Its function is as follows. Catalytic component of a P4-ATPase flippase complex, which catalyzes the hydrolysis of ATP coupled to the transport of glucosylceramide (GlcCer) from the outer to the inner leaflet of the plasma membrane. This chain is Phospholipid-transporting ATPase VD, found in Homo sapiens (Human).